The chain runs to 654 residues: Smc-like protein Sph3 (654 aa).

Coiled-coil stretches lie at residues 135 to 290 (TDAI…LQTV) and 341 to 503 (IRGT…LTAA).

It belongs to the Sph1/Sph2 family.

In terms of biological role, involved in cell-shape determination. Required for the formation of rods and wild-type-like motility. In Haloferax volcanii (strain ATCC 29605 / DSM 3757 / JCM 8879 / NBRC 14742 / NCIMB 2012 / VKM B-1768 / DS2) (Halobacterium volcanii), this protein is Smc-like protein Sph3.